Reading from the N-terminus, the 79-residue chain is uncharacterized protein (79 aa).

Residues 53–73 (LFFAYMVAYIGFGILSIGMIV) form a helical membrane-spanning segment.

The protein resides in the membrane. This is an uncharacterized protein from Escherichia coli O157:H7.